The primary structure comprises 357 residues: Membrane-bound lytic murein transglycosylase C (357 aa).

An N-terminal signal peptide occupies residues M1–A17. Residue C18 is the site of N-palmitoyl cysteine attachment. C18 carries the S-diacylglycerol cysteine lipid modification.

This sequence belongs to the transglycosylase Slt family.

It localises to the cell outer membrane. It catalyses the reaction Exolytic cleavage of the (1-&gt;4)-beta-glycosidic linkage between N-acetylmuramic acid (MurNAc) and N-acetylglucosamine (GlcNAc) residues in peptidoglycan, from either the reducing or the non-reducing ends of the peptidoglycan chains, with concomitant formation of a 1,6-anhydrobond in the MurNAc residue.. Its function is as follows. Murein-degrading enzyme. May play a role in recycling of muropeptides during cell elongation and/or cell division. The protein is Membrane-bound lytic murein transglycosylase C of Mannheimia succiniciproducens (strain KCTC 0769BP / MBEL55E).